A 271-amino-acid polypeptide reads, in one-letter code: Elongation factor Ts (271 aa).

An involved in Mg(2+) ion dislocation from EF-Tu region spans residues threonine 76–valine 79.

Belongs to the EF-Ts family.

The protein resides in the cytoplasm. Functionally, associates with the EF-Tu.GDP complex and induces the exchange of GDP to GTP. It remains bound to the aminoacyl-tRNA.EF-Tu.GTP complex up to the GTP hydrolysis stage on the ribosome. The polypeptide is Elongation factor Ts (Mycobacterium tuberculosis (strain ATCC 25177 / H37Ra)).